A 246-amino-acid polypeptide reads, in one-letter code: MTPPKLPVREGRDALTPRPVSVQRGVNPHAPGSAHLKMGRTEILATVTLDDKPAPHMRGKKEGWLTAEYSMLPRSTTDRQARERNLQNGRRHEIQRLLGRALRSSMDLRPFKNQTLYVDCDVLVADGGTRVASVLAGHAALHDFCDRLINSGQLSEWPIVHNVGAISVGLIGDELRVDLDYEEDKVARADLNVIATDTGLLVEVQGGAELGPITVDEYTRLLSCGVASVQDVMRELTPQLAVIQGI.

Residues 1 to 33 are disordered; sequence MTPPKLPVREGRDALTPRPVSVQRGVNPHAPGS. Residues R90 and 128-130 contribute to the phosphate site; that span reads GTR.

The protein belongs to the RNase PH family. Homohexameric ring arranged as a trimer of dimers.

The catalysed reaction is tRNA(n+1) + phosphate = tRNA(n) + a ribonucleoside 5'-diphosphate. Its function is as follows. Phosphorolytic 3'-5' exoribonuclease that plays an important role in tRNA 3'-end maturation. Removes nucleotide residues following the 3'-CCA terminus of tRNAs; can also add nucleotides to the ends of RNA molecules by using nucleoside diphosphates as substrates, but this may not be physiologically important. Probably plays a role in initiation of 16S rRNA degradation (leading to ribosome degradation) during starvation. The sequence is that of Ribonuclease PH from Deinococcus radiodurans (strain ATCC 13939 / DSM 20539 / JCM 16871 / CCUG 27074 / LMG 4051 / NBRC 15346 / NCIMB 9279 / VKM B-1422 / R1).